The following is a 208-amino-acid chain: Outer-membrane lipoprotein carrier protein (208 aa).

An N-terminal signal peptide occupies residues M1–A25.

Belongs to the LolA family. Monomer.

It localises to the periplasm. Functionally, participates in the translocation of lipoproteins from the inner membrane to the outer membrane. Only forms a complex with a lipoprotein if the residue after the N-terminal Cys is not an aspartate (The Asp acts as a targeting signal to indicate that the lipoprotein should stay in the inner membrane). This Vibrio parahaemolyticus serotype O3:K6 (strain RIMD 2210633) protein is Outer-membrane lipoprotein carrier protein.